The primary structure comprises 51 residues: Large ribosomal subunit protein bL33 (51 aa).

This sequence belongs to the bacterial ribosomal protein bL33 family.

This chain is Large ribosomal subunit protein bL33, found in Alkalilimnicola ehrlichii (strain ATCC BAA-1101 / DSM 17681 / MLHE-1).